A 153-amino-acid polypeptide reads, in one-letter code: Putative pre-16S rRNA nuclease (153 aa).

The protein belongs to the YqgF nuclease family.

Its subcellular location is the cytoplasm. Its function is as follows. Could be a nuclease involved in processing of the 5'-end of pre-16S rRNA. The sequence is that of Putative pre-16S rRNA nuclease from Prochlorococcus marinus (strain MIT 9215).